A 267-amino-acid polypeptide reads, in one-letter code: Small ribosomal subunit protein uS2c (267 aa).

A disordered region spans residues K237–I267. Residues N250 to I267 show a composition bias toward polar residues.

It belongs to the universal ribosomal protein uS2 family.

It localises to the plastid. The protein resides in the chloroplast. This Chlorella vulgaris (Green alga) protein is Small ribosomal subunit protein uS2c (rps2).